Here is a 290-residue protein sequence, read N- to C-terminus: RWD domain-containing protein 2B (290 aa).

Residues Ser-12 to Tyr-136 enclose the RWD domain.

This is RWD domain-containing protein 2B (Rwdd2b) from Mus musculus (Mouse).